The following is a 177-amino-acid chain: Large ribosomal subunit protein uL6 (177 aa).

Basic and acidic residues predominate over residues 152 to 171; it reads RPPEPYKGKGVRYDDEEVRR. Positions 152-177 are disordered; sequence RPPEPYKGKGVRYDDEEVRRKEAKKK.

It belongs to the universal ribosomal protein uL6 family. As to quaternary structure, part of the 50S ribosomal subunit.

This protein binds to the 23S rRNA, and is important in its secondary structure. It is located near the subunit interface in the base of the L7/L12 stalk, and near the tRNA binding site of the peptidyltransferase center. This is Large ribosomal subunit protein uL6 from Shewanella sp. (strain MR-4).